The primary structure comprises 913 residues: Eukaryotic translation initiation factor 3 subunit C (913 aa).

The disordered stretch occupies residues 1-22; sequence MSRFFANGSDSESESSEEEVQA. Positions 11–20 are enriched in acidic residues; the sequence is SESESSEEEV. Residues S34, S165, S177, and S186 each carry the phosphoserine modification. A disordered region spans residues 157-285; sequence FREAPDQESD…KRAEDDEDGE (129 aa). Over residues 162–171 the composition is skewed to acidic residues; sequence DQESDVEEGE. Positions 172 to 184 are enriched in basic and acidic residues; that stretch reads GEPHDSDGDRAGA. Over residues 214–239 the composition is skewed to acidic residues; it reads DEDDSDDSIDWDSDTESETESSEDEN. Basic and acidic residues predominate over residues 244–263; sequence MRERFLKRTTEKEDKDDDKR. A compositionally biased stretch (basic residues) spans 264–276; the sequence is KDKRKEQKHKVRK. Residues 645 to 821 enclose the PCI domain; it reads FHMHINLELL…ETVVMHRSEP (177 aa). A disordered region spans residues 856-913; the sequence is RGNMGNRDRGYNRNQNNQGGNWGGQRRDNRNQRNRNQRGHHKQQQQQQQQQVQTIEEE. Over residues 887 to 898 the composition is skewed to basic residues; that stretch reads QRNRNQRGHHKQ.

The protein belongs to the eIF-3 subunit C family. Component of the eukaryotic translation initiation factor 3 (eIF-3) complex. The eIF-3 complex interacts with pix.

It is found in the cytoplasm. Functionally, component of the eukaryotic translation initiation factor 3 (eIF-3) complex, which is involved in protein synthesis of a specialized repertoire of mRNAs and, together with other initiation factors, stimulates binding of mRNA and methionyl-tRNAi to the 40S ribosome. The eIF-3 complex specifically targets and initiates translation of a subset of mRNAs involved in cell proliferation. This chain is Eukaryotic translation initiation factor 3 subunit C, found in Drosophila mojavensis (Fruit fly).